The chain runs to 765 residues: Myotubularin-related protein 10-A (765 aa).

In terms of domain architecture, Myotubularin phosphatase spans 209–650; sequence FETYSDWDRE…THIKLWKLCY (442 aa).

The protein belongs to the protein-tyrosine phosphatase family. Non-receptor class myotubularin subfamily.

The chain is Myotubularin-related protein 10-A (mtmr10-a) from Xenopus laevis (African clawed frog).